The primary structure comprises 62 residues: Alpha-conotoxin ViIA (62 aa).

The N-terminal stretch at 1–18 is a signal peptide; sequence MGMRMMFVVFLLVVFASS. Positions 19–45 are excised as a propeptide; it reads VTLDRASYGRYASPVDRASALIAQAIL. 2 disulfide bridges follow: C48–C54 and C49–C61.

Belongs to the conotoxin A superfamily. The toxin is inactive on the alpha-3-beta-2 nAChR when the disulfide bond connectivity is C1-C4 and C2-C3 (ViIA-I) (IC(50)&gt;10000 nM). Expressed by the venom duct.

It localises to the secreted. In terms of biological role, alpha-conotoxins act on postsynaptic membranes, they bind to the nicotinic acetylcholine receptors (nAChR) and thus inhibit them. This toxin selectively inhibits nicotinic acetylcholine receptor (nAChR) alpha-3-beta-2 subtype (IC(50)=845.5 nM). The chain is Alpha-conotoxin ViIA from Conus virgo (Virgin cone).